Reading from the N-terminus, the 436-residue chain is Cytochrome b5-related protein (436 aa).

Positions 16 to 100 (PTYRNSALIT…IAKYKVRDAA (85 aa)) constitute a Cytochrome b5 heme-binding domain. The heme site is built by His59 and His82.

Muscle.

May play a role in muscle cell metabolism. In Drosophila melanogaster (Fruit fly), this protein is Cytochrome b5-related protein (Cyt-b5-r).